Reading from the N-terminus, the 364-residue chain is Fructose-bisphosphate aldolase A (364 aa).

Residue Tyr-5 is modified to Phosphotyrosine. The residue at position 9 (Thr-9) is a Phosphothreonine. Phosphoserine is present on residues Ser-36 and Ser-39. N6-acetyllysine; alternate is present on Lys-42. Lys-42 participates in a covalent cross-link: Glycyl lysine isopeptide (Lys-Gly) (interchain with G-Cter in SUMO1); alternate. A Glycyl lysine isopeptide (Lys-Gly) (interchain with G-Cter in SUMO2); alternate cross-link involves residue Lys-42. Residue Arg-43 participates in beta-D-fructose 1,6-bisphosphate binding. Ser-46 is modified (phosphoserine). Lys-99 is modified (N6-(2-hydroxyisobutyryl)lysine). Lys-108 is modified (N6-acetyllysine). Lys-111 is modified (N6-acetyllysine; alternate). An N6-malonyllysine; alternate modification is found at Lys-111. Phosphoserine is present on Ser-132. N6-(2-hydroxyisobutyryl)lysine is present on Lys-147. Glu-188 functions as the Proton acceptor in the catalytic mechanism. Lys-230 acts as the Schiff-base intermediate with dihydroxyacetone-P in catalysis. Ser-272 carries the post-translational modification Phosphoserine. Residues Ser-272–Gly-274, Ser-301, and Arg-304 each bind beta-D-fructose 1,6-bisphosphate. Lys-312 is modified (N6-malonyllysine). Lys-330 carries the post-translational modification N6-acetyllysine.

This sequence belongs to the class I fructose-bisphosphate aldolase family. As to quaternary structure, homotetramer. Interacts with SNX9 and WAS. Interacts with FBP2; the interaction blocks FBP2 inhibition by physiological concentrations of AMP and reduces inhibition by Ca(2+).

The protein resides in the cytoplasm. It localises to the myofibril. Its subcellular location is the sarcomere. The protein localises to the i band. It is found in the m line. The enzyme catalyses beta-D-fructose 1,6-bisphosphate = D-glyceraldehyde 3-phosphate + dihydroxyacetone phosphate. It participates in carbohydrate degradation; glycolysis; D-glyceraldehyde 3-phosphate and glycerone phosphate from D-glucose: step 4/4. In terms of biological role, catalyzes the reversible conversion of beta-D-fructose 1,6-bisphosphate (FBP) into two triose phosphate and plays a key role in glycolysis and gluconeogenesis. In addition, may also function as scaffolding protein. This chain is Fructose-bisphosphate aldolase A (ALDOA), found in Pongo abelii (Sumatran orangutan).